Here is a 658-residue protein sequence, read N- to C-terminus: Deoxynucleoside triphosphate triphosphohydrolase SAMHD1 (658 aa).

The tract at residues Ser23–Asp68 is disordered. Ser49 carries the phosphoserine modification. Thr52 is modified (phosphothreonine). Residue Ser55 is modified to Phosphoserine. Thr56 carries the post-translational modification Phosphothreonine. Residues Ser64 and Ser125 each carry the phosphoserine modification. An SAM domain is found at Trp77–Ser142. GTP contacts are provided by Lys148 and Val149. Asn151 lines the dGTP pocket. Asp169, Gln174, and Arg177 together coordinate GTP. The dGTP site is built by Leu182 and Val188. One can recognise an HD domain in the interval Arg196–Phe348. Residues His199, His238, and Asp239 each contribute to the Mn(2+) site. The dGTP site is built by Asp239, His247, His265, and Glu266. His265 is a catalytic residue. A Mn(2+)-binding site is contributed by Asp343. Residues Tyr347, Asp351, Arg365, Arg395, Lys397, Asn401, Tyr417, His419, and Lys420 each contribute to the dGTP site. Positions 494 and 498 each coordinate GTP. Lys509 participates in a covalent cross-link: Glycyl lysine isopeptide (Lys-Gly) (interchain with G-Cter in SUMO2). Lys565 serves as a coordination point for GTP. A dGTP-binding site is contributed by Lys565. Phosphothreonine is present on Thr634. Residue Thr634 is modified to (Microbial infection) Phosphothreonine.

The protein belongs to the SAMHD1 family. As to quaternary structure, homodimer; in absence of GTP and dNTP. Homotetramer; in GTP- and dNTP-bound form. Interacts with MRE11; leading to stimulate the exonuclease activity of MRE11. Interacts with RBBP8/CtIP. Interacts with RBBP8/CtIP. Interacts (via its C-terminus) with CD81. Zn(2+) serves as cofactor. Phosphorylation at Thr-634 by CDK1 acts as a switch to control deoxynucleoside triphosphate (dNTPase)-dependent and -independent functions. Phosphorylation at Thr-634 takes place in cycling cells: it reduces the stability of the homotetramer, impairing the dNTPase activity and subsequent ability to restrict infection by viruses. It also inhibits ability to suppress LINE-1 retrotransposon activity. In contrast, phosphorylation at Thr-634 promotes DNA end resection at stalled replication forks in response to DNA damage. Post-translationally, (Microbial infection) Phosphorylation at Thr-634 by mouse cytomegalovirus kinase M97 leads to a reduced level of dNTP hydrolase activity and the loss of viral restriction. In terms of processing, not phosphorylated by CDK1 at the C-terminus.

The protein resides in the nucleus. It is found in the chromosome. It catalyses the reaction a 2'-deoxyribonucleoside 5'-triphosphate + H2O = a 2'-deoxyribonucleoside + triphosphate + H(+). The enzyme catalyses dATP + H2O = 2'-deoxyadenosine + triphosphate + H(+). It carries out the reaction dCTP + H2O = 2'-deoxycytidine + triphosphate + H(+). The catalysed reaction is dGTP + H2O = 2'-deoxyguanosine + triphosphate + H(+). It catalyses the reaction dTTP + H2O = thymidine + triphosphate + H(+). With respect to regulation, allosterically activated and regulated via the combined actions of GTP and dNTPs (dATP, dGTP, dTTP and dCTP): Allosteric site 1 binds GTP, while allosteric site 2 binds dNTP. Allosteric activation promotes the formation of highly active homotetramers. Isoform 1: Phosphorylation at Thr-634 impairs homotetramerization, thereby inhibiting dNTPase activity, leading to reduced ability to restrict infection by viruses. Protein that acts both as a host restriction factor involved in defense response to virus and as a regulator of DNA end resection at stalled replication forks. Has deoxynucleoside triphosphate (dNTPase) activity, which is required to restrict infection by viruses: dNTPase activity reduces cellular dNTP levels to levels too low for retroviral reverse transcription to occur, blocking early-stage virus replication in dendritic and other myeloid cells. Likewise, suppresses LINE-1 retrotransposon activity. In addition to virus restriction, dNTPase activity acts as a regulator of DNA precursor pools by regulating dNTP pools. Phosphorylation at Thr-634 acts as a switch to control dNTPase-dependent and -independent functions: it inhibits dNTPase activity and ability to restrict infection by viruses, while it promotes DNA end resection at stalled replication forks. Functions during S phase at stalled DNA replication forks to promote the resection of gapped or reversed forks: acts by stimulating the exonuclease activity of MRE11, activating the ATR-CHK1 pathway and allowing the forks to restart replication. Its ability to promote degradation of nascent DNA at stalled replication forks is required to prevent induction of type I interferons, thereby preventing chronic inflammation. Ability to promote DNA end resection at stalled replication forks is independent of dNTPase activity. Enhances immunoglobulin hypermutation in B-lymphocytes by promoting transversion mutation. This chain is Deoxynucleoside triphosphate triphosphohydrolase SAMHD1, found in Mus musculus (Mouse).